Here is a 351-residue protein sequence, read N- to C-terminus: Alcohol dehydrogenase 5 (351 aa).

The Zn(2+) site is built by Cys-47, His-70, Cys-101, Cys-104, Cys-107, Cys-115, and Cys-183. Residues Gly-181–Gly-187, Asp-205, Lys-210, Val-272–Met-274, and Arg-344 each bind NAD(+).

The protein belongs to the zinc-containing alcohol dehydrogenase family. The cofactor is Zn(2+).

It carries out the reaction a primary alcohol + NAD(+) = an aldehyde + NADH + H(+). The catalysed reaction is a secondary alcohol + NAD(+) = a ketone + NADH + H(+). The polypeptide is Alcohol dehydrogenase 5 (ADH5) (Saccharomyces pastorianus (Lager yeast)).